Consider the following 319-residue polypeptide: Acetyl-coenzyme A carboxylase carboxyl transferase subunit alpha (319 aa).

The 262-residue stretch at 35-296 (NIDEEVHRLR…KAQLLTDLAD (262 aa)) folds into the CoA carboxyltransferase C-terminal domain.

The protein belongs to the AccA family. In terms of assembly, acetyl-CoA carboxylase is a heterohexamer composed of biotin carboxyl carrier protein (AccB), biotin carboxylase (AccC) and two subunits each of ACCase subunit alpha (AccA) and ACCase subunit beta (AccD).

The protein localises to the cytoplasm. It catalyses the reaction N(6)-carboxybiotinyl-L-lysyl-[protein] + acetyl-CoA = N(6)-biotinyl-L-lysyl-[protein] + malonyl-CoA. Its pathway is lipid metabolism; malonyl-CoA biosynthesis; malonyl-CoA from acetyl-CoA: step 1/1. In terms of biological role, component of the acetyl coenzyme A carboxylase (ACC) complex. First, biotin carboxylase catalyzes the carboxylation of biotin on its carrier protein (BCCP) and then the CO(2) group is transferred by the carboxyltransferase to acetyl-CoA to form malonyl-CoA. This chain is Acetyl-coenzyme A carboxylase carboxyl transferase subunit alpha, found in Escherichia coli O45:K1 (strain S88 / ExPEC).